The primary structure comprises 224 residues: MAKKRTSTIMGIDEAGRGPVIGPLVVCGIIVEEKDLPAIEAMGLKDSKKLSAKKREEFAAALKNKYKYELSVLPPQEIDARFESEDNLNRLEVNCFAGLIRSAKPTIAYLDACDVNAERFGINIKKCLDFELEIVSAHEADSKYPIVSAASIIAKVHRDSLIREISEKMGEDVGSGYPADPVTISFLKNYYMKHKCLPDCARKSWKTSNAVIADCLQARLFQFE.

In terms of domain architecture, RNase H type-2 spans 7-217; sequence STIMGIDEAG…SNAVIADCLQ (211 aa). 3 residues coordinate a divalent metal cation: D13, E14, and D111.

This sequence belongs to the RNase HII family. Mn(2+) is required as a cofactor. Requires Mg(2+) as cofactor.

The protein localises to the cytoplasm. The enzyme catalyses Endonucleolytic cleavage to 5'-phosphomonoester.. Its function is as follows. Endonuclease that specifically degrades the RNA of RNA-DNA hybrids. This chain is Ribonuclease HII, found in Methanocella arvoryzae (strain DSM 22066 / NBRC 105507 / MRE50).